Reading from the N-terminus, the 516-residue chain is Homeobox protein 6 (516 aa).

The segment covering 22 to 31 has biased composition (low complexity); the sequence is NYDFDNKNNS. Disordered stretches follow at residues 22–140, 200–256, and 268–348; these read NYDF…PNCN, SLNN…SSPS, and DEND…NNGD. A compositionally biased stretch (gly residues) spans 32–41; that stretch reads IGGGGGGGGS. Low complexity-rich tracts occupy residues 42–59, 66–78, and 101–132; these read SSSR…SSSG, SNSS…IINS, and TTTT…NSSS. Residues 284 to 346 show a composition bias toward low complexity; the sequence is NNNNNNNNNN…NNNNTNTNNN (63 aa). 2 DNA-binding regions (homeobox) span residues 362–421 and 424–483; these read KSGQ…SKSG and SYAK…NKLS. The interval 483-516 is disordered; it reads SSKAIQDKDNQDNDNNNSNNNENNDDSYSDEGLF. The segment covering 495 to 504 has biased composition (low complexity); that stretch reads NDNNNSNNNE. Residues 505–516 are compositionally biased toward acidic residues; it reads NNDDSYSDEGLF.

The protein localises to the nucleus. Putative transcription factor. In Dictyostelium discoideum (Social amoeba), this protein is Homeobox protein 6 (hbx6).